A 156-amino-acid polypeptide reads, in one-letter code: ATP synthase subunit b (156 aa).

A helical membrane pass occupies residues 4–26; it reads GATFWGPMISFALFVWFTMKYVW.

Belongs to the ATPase B chain family. F-type ATPases have 2 components, F(1) - the catalytic core - and F(0) - the membrane proton channel. F(1) has five subunits: alpha(3), beta(3), gamma(1), delta(1), epsilon(1). F(0) has three main subunits: a(1), b(2) and c(10-14). The alpha and beta chains form an alternating ring which encloses part of the gamma chain. F(1) is attached to F(0) by a central stalk formed by the gamma and epsilon chains, while a peripheral stalk is formed by the delta and b chains.

It is found in the cell inner membrane. In terms of biological role, f(1)F(0) ATP synthase produces ATP from ADP in the presence of a proton or sodium gradient. F-type ATPases consist of two structural domains, F(1) containing the extramembraneous catalytic core and F(0) containing the membrane proton channel, linked together by a central stalk and a peripheral stalk. During catalysis, ATP synthesis in the catalytic domain of F(1) is coupled via a rotary mechanism of the central stalk subunits to proton translocation. Component of the F(0) channel, it forms part of the peripheral stalk, linking F(1) to F(0). The chain is ATP synthase subunit b from Alkalilimnicola ehrlichii (strain ATCC BAA-1101 / DSM 17681 / MLHE-1).